Reading from the N-terminus, the 102-residue chain is Co-chaperonin GroES (102 aa).

This sequence belongs to the GroES chaperonin family. As to quaternary structure, heptamer of 7 subunits arranged in a ring. Interacts with the chaperonin GroEL.

It is found in the cytoplasm. Together with the chaperonin GroEL, plays an essential role in assisting protein folding. The GroEL-GroES system forms a nano-cage that allows encapsulation of the non-native substrate proteins and provides a physical environment optimized to promote and accelerate protein folding. GroES binds to the apical surface of the GroEL ring, thereby capping the opening of the GroEL channel. The protein is Co-chaperonin GroES of Vibrio harveyi (Beneckea harveyi).